The chain runs to 322 residues: MSSTQDSKAQTLNSNPEILLRKRRNADRTRIERQELAKKKREEQIKKKRSNKNKFVRAESIVAKTLATSREKERIKRVSILEDKKAKNETQHIASGKDFILKITEKANGAEENSVDLEETEEEEDDGLIREKTTYDGKPALLFIVRVRGPLAVNIPNKAFKILSLLRLVETNTGVFVKLTKNVYPLLKVIAPYVVIGKPSLSSIRSLIQKRGRIIYKGENEAEPHEIVLNDNNIVEEQLGDHGIICVEDIIHEIATMGESFSVCNFFLQPFKLNREVSGFGSLNRLRKIKQREAESRTRQFSNAATAPVIEVDIDSLLAKLN.

Residues 1–16 (MSSTQDSKAQTLNSNP) show a composition bias toward polar residues. A disordered region spans residues 1 to 52 (MSSTQDSKAQTLNSNPEILLRKRRNADRTRIERQELAKKKREEQIKKKRSNK). Ser-2 is subject to N-acetylserine. At Ser-14 the chain carries Phosphoserine. A compositionally biased stretch (basic and acidic residues) spans 26–45 (ADRTRIERQELAKKKREEQI). Thr-120 carries the post-translational modification Phosphothreonine. Ser-278 bears the Phosphoserine mark.

The protein belongs to the universal ribosomal protein uL30 family.

The protein localises to the nucleus. The protein resides in the nucleolus. Involved in the biogenesis of the 60S ribosomal subunit. May act as a specificity factor that binds precursor rRNAs and tethers the enzymes that carry out the early 5' to 3' exonucleolytic reactions that generate the mature rRNAs. The protein is Ribosome biogenesis protein RLP7 (RLP7) of Saccharomyces cerevisiae (strain ATCC 204508 / S288c) (Baker's yeast).